The chain runs to 298 residues: Formylmethanofuran--tetrahydromethanopterin formyltransferase (298 aa).

The protein belongs to the FTR family. As to quaternary structure, homotetramer.

The protein resides in the cytoplasm. The catalysed reaction is N-formylmethanofuran + 5,6,7,8-tetrahydromethanopterin + H(+) = N(5)-formyl-5,6,7,8-tetrahydromethanopterin + methanofuran. The protein operates within one-carbon metabolism; formaldehyde degradation; formate from formaldehyde (H(4)MPT route): step 4/5. Its function is as follows. Catalyzes the transfer of a formyl group from 5-formyl tetrahydromethanopterin (5-formyl-H(4)MPT) to methanofuran (MFR) to produce formylmethanofuran (formyl-MFR) and tetrahydromethanopterin (H(4)MPT). This chain is Formylmethanofuran--tetrahydromethanopterin formyltransferase, found in Methylococcus capsulatus (strain ATCC 33009 / NCIMB 11132 / Bath).